We begin with the raw amino-acid sequence, 427 residues long: Trigger factor (427 aa).

The region spanning 163 to 248 (GDTVVIDFVG…IHEVKAKEVP (86 aa)) is the PPIase FKBP-type domain.

It belongs to the FKBP-type PPIase family. Tig subfamily.

It is found in the cytoplasm. The catalysed reaction is [protein]-peptidylproline (omega=180) = [protein]-peptidylproline (omega=0). Its function is as follows. Involved in protein export. Acts as a chaperone by maintaining the newly synthesized protein in an open conformation. Functions as a peptidyl-prolyl cis-trans isomerase. The chain is Trigger factor from Streptococcus pneumoniae (strain ATCC 700669 / Spain 23F-1).